Consider the following 1767-residue polypeptide: Endo-alpha-N-acetylgalactosaminidase (1767 aa).

Positions 1–39 are cleaved as a signal peptide; it reads MNKGLFEKRCKYSIRKFSLGVASVMIGAAFFGTSPVLAD. 2 stretches are compositionally biased toward basic and acidic residues: residues 61–75 and 84–111; these read KENDGRDFEAPKVGE and DGPKTEEELLALEKEKPAEEKPKEDKPA. 2 disordered regions span residues 61–124 and 301–324; these read KEND…VTPE and VKTDNQEGVKTEDTPAEKETGPEV. A compositionally biased stretch (low complexity) spans 112–124; sequence AAKPETPKTVTPE. A compositionally biased stretch (basic and acidic residues) spans 304–324; it reads DNQEGVKTEDTPAEKETGPEV. Residues D577, N579, D581, N583, and D588 each contribute to the Ca(2+) site. Residues 602 to 893 form a catalytic region; sequence GWEKVKDITA…DVMTKYFQHF (292 aa). D658 is a binding site for substrate. Catalysis depends on D764, which acts as the Nucleophile. The active-site Proton donor/acceptor is the E796. Residues D1233, E1235, E1281, W1284, and D1411 each coordinate Ca(2+). Residues 1711–1730 form a disordered region; the sequence is LASEQGKTPDYKQEIARPET. The span at 1717 to 1730 shows a compositional bias: basic and acidic residues; sequence KTPDYKQEIARPET. An LPXTG sorting signal motif is present at residues 1735-1739; it reads LPATG. Position 1738 is a pentaglycyl murein peptidoglycan amidated threonine (T1738). A propeptide spans 1739 to 1767 (removed by sortase); it reads GESQSDTALILASVSLALSALFVVKTKKD.

It belongs to the glycosyl hydrolase 101 family. A subfamily.

It localises to the secreted. The protein localises to the cell wall. It carries out the reaction a 3-O-[beta-D-galactosyl-(1-&gt;3)-N-acetyl-alpha-D-galactosaminyl]-L-threonyl-[protein] + H2O = beta-D-galactosyl-(1-&gt;3)-N-acetyl-D-galactosamine + L-threonyl-[protein]. It catalyses the reaction a 3-O-[beta-D-galactosyl-(1-&gt;3)-N-acetyl-alpha-D-galactosaminyl]-L-seryl-[protein] + H2O = beta-D-galactosyl-(1-&gt;3)-N-acetyl-D-galactosamine + L-seryl-[protein]. Involved in the breakdown of mucin-type O-linked glycans. Specifically removes the T-antigen disaccharide (Gal-beta-1,3-GalNAc-alpha) from extracellular host glycoproteins. Representative of a broadly important class of virulence factors. This chain is Endo-alpha-N-acetylgalactosaminidase, found in Streptococcus pneumoniae serotype 4 (strain ATCC BAA-334 / TIGR4).